The sequence spans 108 residues: UPF0060 membrane protein amb3269 (108 aa).

4 consecutive transmembrane segments (helical) span residues 4-24 (IPTYILAAFAEIGGCFAFWAW), 31-51 (PLWLVPGMASLGLFAWALTRI), 59-79 (AYAAYGGIYILASLIWMWAVE), and 85-105 (RWDTIGAAICVVGAMVIIFGP).

This sequence belongs to the UPF0060 family.

The protein localises to the cell inner membrane. The protein is UPF0060 membrane protein amb3269 of Paramagnetospirillum magneticum (strain ATCC 700264 / AMB-1) (Magnetospirillum magneticum).